Here is a 699-residue protein sequence, read N- to C-terminus: Polyribonucleotide nucleotidyltransferase (699 aa).

Residues aspartate 484 and aspartate 490 each coordinate Mg(2+). Positions 551–610 (PRITTIQVKPDQVRTVIGPGGKNVRGIIEATGCAIDIEDDGRINIASADGDACKAAIKMI) constitute a KH domain. The S1 motif domain occupies 620–688 (GKLYMATVKK…RQGKIKLSRK (69 aa)).

The protein belongs to the polyribonucleotide nucleotidyltransferase family. The cofactor is Mg(2+).

It is found in the cytoplasm. The enzyme catalyses RNA(n+1) + phosphate = RNA(n) + a ribonucleoside 5'-diphosphate. Its function is as follows. Involved in mRNA degradation. Catalyzes the phosphorolysis of single-stranded polyribonucleotides processively in the 3'- to 5'-direction. The protein is Polyribonucleotide nucleotidyltransferase of Syntrophotalea carbinolica (strain DSM 2380 / NBRC 103641 / GraBd1) (Pelobacter carbinolicus).